The primary structure comprises 143 residues: Nucleoside diphosphate kinase (143 aa).

Residues lysine 11, phenylalanine 59, arginine 87, threonine 93, arginine 104, and asparagine 114 each contribute to the ATP site. Histidine 117 functions as the Pros-phosphohistidine intermediate in the catalytic mechanism.

It belongs to the NDK family. Homotetramer. The cofactor is Mg(2+).

It localises to the cytoplasm. It catalyses the reaction a 2'-deoxyribonucleoside 5'-diphosphate + ATP = a 2'-deoxyribonucleoside 5'-triphosphate + ADP. It carries out the reaction a ribonucleoside 5'-diphosphate + ATP = a ribonucleoside 5'-triphosphate + ADP. In terms of biological role, major role in the synthesis of nucleoside triphosphates other than ATP. The ATP gamma phosphate is transferred to the NDP beta phosphate via a ping-pong mechanism, using a phosphorylated active-site intermediate. The polypeptide is Nucleoside diphosphate kinase (Thioalkalivibrio sulfidiphilus (strain HL-EbGR7)).